The chain runs to 431 residues: Serine hydroxymethyltransferase 2 (431 aa).

Residues Leu131 and 135 to 137 (GHL) each bind (6S)-5,6,7,8-tetrahydrofolate. Lys240 carries the N6-(pyridoxal phosphate)lysine modification.

This sequence belongs to the SHMT family. In terms of assembly, homodimer. Pyridoxal 5'-phosphate is required as a cofactor.

It localises to the cytoplasm. It catalyses the reaction (6R)-5,10-methylene-5,6,7,8-tetrahydrofolate + glycine + H2O = (6S)-5,6,7,8-tetrahydrofolate + L-serine. The protein operates within one-carbon metabolism; tetrahydrofolate interconversion. It participates in amino-acid biosynthesis; glycine biosynthesis; glycine from L-serine: step 1/1. Functionally, catalyzes the reversible interconversion of serine and glycine with tetrahydrofolate (THF) serving as the one-carbon carrier. This reaction serves as the major source of one-carbon groups required for the biosynthesis of purines, thymidylate, methionine, and other important biomolecules. Also exhibits THF-independent aldolase activity toward beta-hydroxyamino acids, producing glycine and aldehydes, via a retro-aldol mechanism. This is Serine hydroxymethyltransferase 2 from Vibrio parahaemolyticus serotype O3:K6 (strain RIMD 2210633).